Here is a 972-residue protein sequence, read N- to C-terminus: Mast/stem cell growth factor receptor Kit (972 aa).

The N-terminal stretch at 1 to 25 (MRGARRAWDFLFVLQLLLRVQTGSS) is a signal peptide. Over 26 to 520 (QPSVSPEELS…QIHAHTLFTP (495 aa)) the chain is Extracellular. 5 Ig-like C2-type domains span residues 27-112 (PSVS…VFVR), 121-205 (DPPL…LKVR), 212-308 (PVVA…LEVV), 317-410 (PMMN…VYVN), and 413-507 (PEIL…FNFA). Intrachain disulfides connect Cys-58-Cys-97, Cys-136-Cys-186, Cys-151-Cys-183, and Cys-233-Cys-290. 2 N-linked (GlcNAc...) asparagine glycosylation sites follow: Asn-94 and Asn-145. N-linked (GlcNAc...) asparagine glycans are attached at residues Asn-283, Asn-293, Asn-300, Asn-320, Asn-352, Asn-367, Asn-400, Asn-463, and Asn-486. Cys-428 and Cys-491 are oxidised to a cystine. Residues 521 to 541 (LLIGFVIAAGMMCIIVMILTY) traverse the membrane as a helical segment. Residues 542–972 (KYLQKPMYEV…TQPLLVHEDV (431 aa)) lie on the Cytoplasmic side of the membrane. 4 positions are modified to phosphotyrosine; by autocatalysis: Tyr-543, Tyr-549, Tyr-564, and Tyr-566. Tyr-564 serves as a coordination point for Mg(2+). The tract at residues 564–566 (YVY) is important for interaction with phosphotyrosine-binding proteins. Residues 585–933 (LSFGKTLGAG…ISESTNHIYS (349 aa)) enclose the Protein kinase domain. Residues 592–599 (GAGAFGKV), Lys-619, and 667–673 (EYCCYGD) each bind ATP. Residues Tyr-699, Tyr-717, and Tyr-726 each carry the phosphotyrosine; by autocatalysis modification. Residues Ser-737 and Ser-742 each carry the phosphoserine; by PKC/PRKCA modification. Catalysis depends on Asp-788, which acts as the Proton acceptor. Arg-792 serves as a coordination point for ATP. Mg(2+) is bound by residues Asn-793 and Asp-806. Residue Ser-817 is modified to Phosphoserine. Tyr-819 carries the post-translational modification Phosphotyrosine; by autocatalysis. A Phosphoserine modification is found at Ser-887. 2 positions are modified to phosphotyrosine; by autocatalysis: Tyr-896 and Tyr-932. Ser-955 bears the Phosphoserine mark.

It belongs to the protein kinase superfamily. Tyr protein kinase family. CSF-1/PDGF receptor subfamily. Monomer in the absence of bound KITLG/SCF. Homodimer in the presence of bound KITLG/SCF, forming a heterotetramer with two KITLG/SCF molecules. Interacts (via phosphorylated tyrosine residues) with the adapter proteins GRB2 and GRB7 (via SH2 domain), and SH2B2/APS. Interacts (via C-terminus) with MPDZ (via the tenth PDZ domain). Interacts (via phosphorylated tyrosine residues) with PIK3R1 and PIK3 catalytic subunit. Interacts (via phosphorylated tyrosine) with CRK (isoform Crk-II), FYN, SHC1 and MATK/CHK (via SH2 domain). Interacts with LYN and FES/FPS. Interacts (via phosphorylated tyrosine residues) with the protein phosphatases PTPN6/SHP-1 (via SH2 domain), PTPN11/SHP-2 (via SH2 domain) and PTPRU. Interacts with PLCG1. Interacts with DOK1 and TEC. Interacts with IL1RAP (independent of stimulation with KITLG/SCF). A mast cell-specific KITLG/SCF-induced interleukin-33 signaling complex contains IL1RL1, IL1RAP, KIT and MYD88. Ubiquitinated by SOCS6. KIT is rapidly ubiquitinated after autophosphorylation induced by KITLG/SCF binding, leading to internalization and degradation. In terms of processing, autophosphorylated on tyrosine residues. KITLG/SCF binding promotes autophosphorylation. Phosphorylated tyrosine residues are important for interaction with specific binding partners.

The protein resides in the cell membrane. It catalyses the reaction L-tyrosyl-[protein] + ATP = O-phospho-L-tyrosyl-[protein] + ADP + H(+). Present in an inactive conformation in the absence of bound ligand. KITLG/SCF binding leads to dimerization and activation by autophosphorylation on tyrosine residues. Activity is down-regulated by PRKCA-mediated phosphorylation on serine residues. In terms of biological role, tyrosine-protein kinase that acts as a cell-surface receptor for the cytokine KITLG/SCF and plays an essential role in the regulation of cell survival and proliferation, hematopoiesis, stem cell maintenance, gametogenesis, mast cell development, migration and function, and in melanogenesis. In response to KITLG/SCF binding, KIT can activate several signaling pathways. Phosphorylates PIK3R1, PLCG1, SH2B2/APS and CBL. Activates the AKT1 signaling pathway by phosphorylation of PIK3R1, the regulatory subunit of phosphatidylinositol 3-kinase. Activated KIT also transmits signals via GRB2 and activation of RAS, RAF1 and the MAP kinases MAPK1/ERK2 and/or MAPK3/ERK1. Promotes activation of STAT family members STAT1, STAT3, STAT5A and STAT5B. Activation of PLCG1 leads to the production of the cellular signaling molecules diacylglycerol and inositol 1,4,5-trisphosphate. KIT signaling is modulated by protein phosphatases, and by rapid internalization and degradation of the receptor. Activated KIT promotes phosphorylation of the protein phosphatases PTPN6/SHP-1 and PTPRU, and of the transcription factors STAT1, STAT3, STAT5A and STAT5B. Promotes phosphorylation of PIK3R1, CBL, CRK (isoform Crk-II), LYN, MAPK1/ERK2 and/or MAPK3/ERK1, PLCG1, SRC and SHC1. The protein is Mast/stem cell growth factor receptor Kit (KIT) of Sus scrofa (Pig).